Consider the following 171-residue polypeptide: MNIDDTFILLGVIYAAHGVRGCVKIKTFTHDPSDIAAYGPLTDGSESLKVSVMSVIKNGCVIAKISGIDDRCSAEALKNKKLYVSSSCLPKLKNDEFYKDELIGLSVKLPDDTIFGIVTEVFNFGSGDIVEISTPQGKKEMFSFTSNIFPSIDMKTREMTIVPPEIVGVYK.

Residues Asn-94–Gly-168 enclose the PRC barrel domain.

This sequence belongs to the RimM family. Binds ribosomal protein uS19.

It is found in the cytoplasm. Its function is as follows. An accessory protein needed during the final step in the assembly of 30S ribosomal subunit, possibly for assembly of the head region. Essential for efficient processing of 16S rRNA. May be needed both before and after RbfA during the maturation of 16S rRNA. It has affinity for free ribosomal 30S subunits but not for 70S ribosomes. The polypeptide is Ribosome maturation factor RimM (Anaplasma phagocytophilum (strain HZ)).